Consider the following 301-residue polypeptide: MADQPKPISPLKNLLAGGFGGVCLVFVGHPLDTVKVRLQTQPPSLPGQPPMYSGTFDCFRKTLFREGIRGLYRGMAAPIIGVTPMFAVCFFGFGLGKKLQQKHPEDVLSYPQLFAAGMLSGIFTTGIMTPGERIKCLLQIQASSGETKYTGTLDCAKKLYQEFGIRGIYKGTVVTLMRDVPASGMYFMTYEWVKNIFTPEGKRVSELSVPRVLVAGGIAGIFNWAVAIPPDVLKSRFQTAPPGKYPNGFRDVLRELIPDEGVTSLYKGFNAVMIRAFPANAACFLGFEVAMKFLNWATPNL.

Position 2 is an N-acetylalanine (alanine 2). The Cytoplasmic segment spans residues 2 to 12 (ADQPKPISPLK). Solcar repeat units lie at residues 8-99 (ISPL…GKKL), 108-196 (LSYP…VKNI), and 207-293 (LSVP…AMKF). A helical transmembrane segment spans residues 13–31 (NLLAGGFGGVCLVFVGHPL). Residues 32–73 (DTVKVRLQTQPPSLPGQPPMYSGTFDCFRKTLFREGIRGLYR) are Mitochondrial matrix-facing. Residues 74 to 93 (GMAAPIIGVTPMFAVCFFGF) form a helical membrane-spanning segment. Over 94 to 112 (GLGKKLQQKHPEDVLSYPQ) the chain is Cytoplasmic. A helical transmembrane segment spans residues 113 to 131 (LFAAGMLSGIFTTGIMTPG). The Mitochondrial matrix segment spans residues 132–170 (ERIKCLLQIQASSGETKYTGTLDCAKKLYQEFGIRGIYK). An N6-acetyllysine mark is found at lysine 148 and lysine 157. Lysine 170 is modified (N6-acetyllysine; alternate). N6-succinyllysine; alternate is present on lysine 170. A helical membrane pass occupies residues 171-190 (GTVVTLMRDVPASGMYFMTY). Residues 191–211 (EWVKNIFTPEGKRVSELSVPR) lie on the Cytoplasmic side of the membrane. The chain crosses the membrane as a helical span at residues 212 to 230 (VLVAGGIAGIFNWAVAIPP). Residues 231 to 267 (DVLKSRFQTAPPGKYPNGFRDVLRELIPDEGVTSLYK) lie on the Mitochondrial matrix side of the membrane. The helical transmembrane segment at 268–287 (GFNAVMIRAFPANAACFLGF) threads the bilayer. Residues 288–301 (EVAMKFLNWATPNL) are Cytoplasmic-facing.

Belongs to the mitochondrial carrier (TC 2.A.29) family.

The protein resides in the mitochondrion inner membrane. It carries out the reaction O-acetyl-(R)-carnitine(in) + (R)-carnitine(out) = O-acetyl-(R)-carnitine(out) + (R)-carnitine(in). The enzyme catalyses an O-acyl-(R)-carnitine(in) + (R)-carnitine(out) = an O-acyl-(R)-carnitine(out) + (R)-carnitine(in). It catalyses the reaction O-propanoyl-(R)-carnitine(in) + (R)-carnitine(out) = O-propanoyl-(R)-carnitine(out) + (R)-carnitine(in). The catalysed reaction is O-hexadecanoyl-(R)-carnitine(in) + (R)-carnitine(out) = O-hexadecanoyl-(R)-carnitine(out) + (R)-carnitine(in). It carries out the reaction O-octanoyl-(R)-carnitine(in) + (R)-carnitine(out) = O-octanoyl-(R)-carnitine(out) + (R)-carnitine(in). The enzyme catalyses (R)-carnitine(in) = (R)-carnitine(out). Functionally, mediates the electroneutral exchange of acylcarnitines (O-acyl-(R)-carnitine or L-acylcarnitine) of different acyl chain lengths (ranging from O-acetyl-(R)-carnitine to long-chain O-acyl-(R)-carnitines) with free carnitine ((R)-carnitine or L-carnitine) across the mitochondrial inner membrane, via a ping-pong mechanism. Key player in the mitochondrial oxidation pathway, it translocates the fatty acids in the form of acylcarnitines into the mitochondrial matrix, where the carnitine palmitoyltransferase 2 (CPT-2) activates them to undergo fatty acid beta-oxidation. Catalyzes the unidirectional transport (uniport) of carnitine at lower rates than the antiport (exchange). In Macaca fascicularis (Crab-eating macaque), this protein is Mitochondrial carnitine/acylcarnitine carrier protein (SLC25A20).